The following is a 473-amino-acid chain: Ribosomal RNA small subunit methyltransferase F (473 aa).

S-adenosyl-L-methionine is bound by residues 124–130 (ASAPGSK), Glu-148, Asp-175, and Asp-193. Catalysis depends on Cys-246, which acts as the Nucleophile.

The protein belongs to the class I-like SAM-binding methyltransferase superfamily. RsmB/NOP family.

It localises to the cytoplasm. It catalyses the reaction cytidine(1407) in 16S rRNA + S-adenosyl-L-methionine = 5-methylcytidine(1407) in 16S rRNA + S-adenosyl-L-homocysteine + H(+). In terms of biological role, specifically methylates the cytosine at position 1407 (m5C1407) of 16S rRNA. This is Ribosomal RNA small subunit methyltransferase F from Aliivibrio fischeri (strain MJ11) (Vibrio fischeri).